Consider the following 398-residue polypeptide: Acetate kinase (398 aa).

Residue Asn7 coordinates Mg(2+). Lys14 contributes to the ATP binding site. Arg92 contributes to the substrate binding site. Residue Asp149 is the Proton donor/acceptor of the active site. Residues 208-212 (HLGNG), 283-285 (DCR), and 331-335 (GIGEN) each bind ATP. Residue Glu385 coordinates Mg(2+).

This sequence belongs to the acetokinase family. As to quaternary structure, homodimer. It depends on Mg(2+) as a cofactor. Mn(2+) is required as a cofactor.

Its subcellular location is the cytoplasm. The enzyme catalyses acetate + ATP = acetyl phosphate + ADP. Its pathway is metabolic intermediate biosynthesis; acetyl-CoA biosynthesis; acetyl-CoA from acetate: step 1/2. Catalyzes the formation of acetyl phosphate from acetate and ATP. Can also catalyze the reverse reaction. The protein is Acetate kinase of Fusobacterium nucleatum subsp. nucleatum (strain ATCC 25586 / DSM 15643 / BCRC 10681 / CIP 101130 / JCM 8532 / KCTC 2640 / LMG 13131 / VPI 4355).